Here is a 1476-residue protein sequence, read N- to C-terminus: ABC-type transporter frbG (1476 aa).

5 helical membrane-spanning segments follow: residues 26-46 (LLFEEAVLAAVPLGLCVVLAL), 64-84 (LYYAKLTALFLLASVQLVQLI), 97-117 (SIAIAAVSFASTIVFIGLCHL), 122-142 (SAKPSDLLTLYFVTCIAFDII), and 146-166 (TLWIVSGGTAVASTFTVGLVL). N244 carries an N-linked (GlcNAc...) asparagine glycan. Transmembrane regions (helical) follow at residues 266–286 (FLAGVLPRLALTGFTFAQPFL), 302–322 (AGATGTWLIVAYAGVYIGIAI), 380–400 (LQTMHQAWASFVDICLATWLL), and 409–429 (IPSVGFSLLCVVFGGGVAVMA). Residues 274–553 (LALTGFTFAQ…FVHSAVNLML (280 aa)) form the ABC transmembrane type-1 1 domain. A glycan (N-linked (GlcNAc...) asparagine) is linked at N464. 2 consecutive transmembrane segments (helical) span residues 487–507 (CLVFMVSLTYLSNVFAPIIGF) and 533–553 (IFALLTEGVGSFVHSAVNLML). The ABC transporter 1 domain maps to 619–845 (IQARDTNIGW…VTAHVHNQTS (227 aa)). 652–659 (GPTNSGKS) is an ATP binding site. N-linked (GlcNAc...) asparagine glycosylation is found at N694, N776, N805, and N842. 5 helical membrane passes run 898 to 918 (AVFLALCMALVFAMVFPSIWV), 936 to 956 (YLLVYFFLGVAALIALIGGGS), 1017 to 1037 (LFAFITCIAQAIVVCVSSPFV), 1121 to 1141 (LGLVLDLVVAGIAILLAIVIV), and 1151 to 1171 (GFLGIALTSLVSFGLNLGGFI). The 282-residue stretch at 898 to 1179 (AVFLALCMAL…FIGGWTGLET (282 aa)) folds into the ABC transmembrane type-1 2 domain. An ABC transporter 2 domain is found at 1216–1447 (IVFDDVTASY…LSSSSPTSSP (232 aa)). N1235 carries an N-linked (GlcNAc...) asparagine glycan. An ATP-binding site is contributed by 1250–1257 (GRTGSGKS).

It belongs to the ABC transporter superfamily. ABCC family. Conjugate transporter (TC 3.A.1.208) subfamily.

The protein localises to the cell membrane. In terms of biological role, ABC-type transporter; part of the gene cluster that mediates the biosynthesis of the antifungal antibiotic FR901469, an inhibitor of beta-1,3-glucansynthase, exerting antifungal activity against the pathogenes Candida albicans and Aspergillus fumigatus. FR901469 is a cyclic depsipeptide containing 12 amino acid residues and a fatty acid chain. Probably involved in the secretion of FR901469. This chain is ABC-type transporter frbG, found in Dothideomycetidae sp. (strain 11243) (Fungal sp. (strain No.11243)).